A 69-amino-acid polypeptide reads, in one-letter code: Large ribosomal subunit protein uL29 (69 aa).

Belongs to the universal ribosomal protein uL29 family.

The sequence is that of Large ribosomal subunit protein uL29 from Thermoanaerobacter pseudethanolicus (strain ATCC 33223 / 39E) (Clostridium thermohydrosulfuricum).